A 210-amino-acid chain; its full sequence is Cell division protein SepF (210 aa).

Positions 13 to 78 are disordered; that stretch reads GFGEPTGYDY…VTSTAMNPPM (66 aa). A compositionally biased stretch (acidic residues) spans 22-31; sequence YDYDEMEGDD. Over residues 47-60 the composition is skewed to basic and acidic residues; that stretch reads RSEEPHPRPSEPEM. Residues 64-78 show a composition bias toward polar residues; the sequence is VNTSAVTSTAMNPPM.

The protein belongs to the SepF family. As to quaternary structure, homodimer. Interacts with FtsZ.

The protein localises to the cytoplasm. Its function is as follows. Cell division protein that is part of the divisome complex and is recruited early to the Z-ring. Probably stimulates Z-ring formation, perhaps through the cross-linking of FtsZ protofilaments. Its function overlaps with FtsA. In Cyanothece sp. (strain PCC 7425 / ATCC 29141), this protein is Cell division protein SepF.